A 2878-amino-acid polypeptide reads, in one-letter code: Trinucleotide repeat-containing gene 18 protein (2878 aa).

Disordered regions lie at residues 1 to 54 (MDGR…KYMA) and 102 to 194 (TQKD…SSRL). The segment covering 119 to 128 (TPSSRTPSGH) has biased composition (polar residues). Composition is skewed to basic and acidic residues over residues 137-149 (SSREGTGKDRAGR), 158-169 (GKKDPRAREEVS), and 179-194 (QEARAEGRQDRGSSRL). Residue S199 is modified to Phosphoserine. Disordered regions lie at residues 259 to 289 (ARPCGSPLPPPPPLPPKGPPAPPSSTPAGVY), 313 to 442 (FDER…KWKP), 487 to 507 (MPRASATCGRPGADLHSAAHG), 540 to 655 (SPFG…DDEC), 865 to 1002 (AQEH…ALFT), 1033 to 1104 (ADGL…LESP), 1127 to 1146 (LEAQALSTAGPGCREPSEVS), 1171 to 1228 (LGTQ…DCDL), 1429 to 1535 (ELVK…DSSS), 1613 to 1668 (LGLS…DEDE), 1694 to 1718 (VPKNSKPATGPKLTKRGLAGPRTLK), and 1737 to 1787 (EARS…GEQA). Over residues 264–283 (SPLPPPPPLPPKGPPAPPSS) the composition is skewed to pro residues. Basic and acidic residues-rich tracts occupy residues 327–337 (RDVRAREREPG) and 350–362 (RLERPEVLREKSS). A compositionally biased stretch (low complexity) spans 376-390 (PPAARSSRSSPDARA). The segment covering 396–411 (ELLKPEADPRPCERAP) has biased composition (basic and acidic residues). Residue S540 is modified to Phosphoserine. K549 participates in a covalent cross-link: Glycyl lysine isopeptide (Lys-Gly) (interchain with G-Cter in SUMO2). 2 stretches are compositionally biased toward basic and acidic residues: residues 580-589 (LKRDPERPES) and 865-881 (AQEHRTEMEEKISKRSL). Positions 958-969 (SSPPPASPPPTP) are enriched in pro residues. Basic and acidic residues predominate over residues 972–993 (TRKEEAPENVVEKKDLELEKET). 2 positions are modified to phosphoserine: S1053 and S1062. A compositionally biased stretch (basic and acidic residues) spans 1068 to 1088 (EPPRDSPEEEQLADREVKAEV). A coiled-coil region spans residues 1410–1442 (LDFRMRLAEVQRRYKEKQRELVKLQRRRDSGDR). The span at 1429-1448 (ELVKLQRRRDSGDRHEDAHR) shows a compositional bias: basic and acidic residues. Residues 1449–1463 (SLARRGPGRPRKRTH) are compositionally biased toward basic residues. At S1469 the chain carries Phosphoserine. Positions 1478 to 1492 (SSSGKGLSSKSLLTS) are enriched in low complexity. The segment covering 1745–1775 (SSEEDSFDQDDSSEEEEEELEEEEEDEEEEG) has biased composition (acidic residues). S1789 and S1795 each carry phosphoserine. Residues 1825–1835 (EQKARKKEERQ) show a composition bias toward basic and acidic residues. Disordered stretches follow at residues 1825–2040 (EQKA…GAVS), 2052–2080 (FEANQDSSFSEDEHLPRGGATERPLTPAP), and 2226–2681 (LLVP…RLPS). Residues 1876 to 1890 (AAPGPGSRASGPSSP) show a composition bias toward low complexity. Basic and acidic residues-rich tracts occupy residues 1891-1900 (DKAKLVSEKG), 1925-1936 (LWTRRRSERIFL), 1966-1978 (PRKDTGRAKDRKD), and 2024-2034 (RGKEAKKENRG). T2077 bears the Phosphothreonine mark. A compositionally biased stretch (basic and acidic residues) spans 2238 to 2247 (TSKDTGEVKE). Basic residues predominate over residues 2261-2270 (ARGRGRKPST). Basic and acidic residues-rich tracts occupy residues 2307–2316 (STPEPVDKRA) and 2409–2419 (AKEALLLREDP). Composition is skewed to low complexity over residues 2460–2470 (EPGPGLPLEDP), 2491–2520 (TTSSSSSSSSSSSSSSSSSSSSSSSSSGSE), and 2540–2578 (RTCSAASSRASSPASSSSSSSSSSSSSSSSSSSSSSSST). Positions 2579 to 2591 (TDEDSSCSSDEEA) are enriched in acidic residues. Residues 2631-2641 (TQPPPQPPPQP) are compositionally biased toward pro residues. The residue at position 2681 (S2681) is a Phosphoserine. In terms of domain architecture, BAH spans 2727–2872 (EMIRIGDCAV…PTTGMIFSTD (146 aa)).

This is Trinucleotide repeat-containing gene 18 protein (Tnrc18) from Mus musculus (Mouse).